Reading from the N-terminus, the 412-residue chain is Branched-chain alpha-ketoacid dehydrogenase kinase (412 aa).

The N-terminal 30 residues, 1-30 (MILASVLRSGPGGGLPLRPLLGPALALRAR), are a transit peptide targeting the mitochondrion. Ser-31 is subject to Phosphoserine. Phosphoserine; by autocatalysis is present on Ser-52. The Histidine kinase domain maps to 159–404 (LDDHKDVVTL…DVYLRLRHID (246 aa)). Residues Lys-192 and Lys-233 each carry the N6-acetyllysine modification. Residues Asn-279 and Asp-315 each coordinate ATP. Asn-279 provides a ligand contact to Mg(2+). K(+) contacts are provided by Val-328, Asp-330, and Phe-333. Thr-334 and Thr-335 together coordinate ATP. Phosphoserine occurs at positions 356 and 360. ATP-binding residues include His-364, Gly-367, and Leu-370. Gly-367 provides a ligand contact to K(+).

The protein belongs to the PDK/BCKDK protein kinase family. As to quaternary structure, homodimer. Homotetramer. Dimerizes through interaction of two opposing nucleotide-binding domains. Interacts with E2 component of the branched-chain alpha-ketoacid dehydrogenase (BCKDH) complex. Competes with BCKDK for binding to the E2 component; this interaction is modulated by branched-chain alpha-keto acids. At steady state, BCKDH holoenzyme contains BCKDK and BCKDHA is phosphorylated. In response to high levels of branched-chain alpha-keto acids, the inhibitory BCKDK is replaced by activating PPM1K leading to BCKDHA dephosphorylation and BCAA degradation. Autophosphorylated. In terms of tissue distribution, ubiquitous.

The protein resides in the mitochondrion matrix. The catalysed reaction is L-seryl-[3-methyl-2-oxobutanoate dehydrogenase] + ATP = O-phospho-L-seryl-[3-methyl-2-oxobutanoate dehydrogenase] + ADP + H(+). It catalyses the reaction L-seryl-[protein] + ATP = O-phospho-L-seryl-[protein] + ADP + H(+). It functions in the pathway protein modification. Allosterically inhibited by certain thiazoles and thiophenes: thiazoles increase interaction with DBT/BCKDH-E2, whereas thiophenes reduce this interaction. Inhibited by 3,6- dichlorobenzo[b]thiophene-2-carboxylic acid (BT2). The ATP binding is mediated by both potassium and magnesium ions. In terms of biological role, serine/threonine-protein kinase component of macronutrients metabolism. Forms a functional kinase and phosphatase pair with PPM1K, serving as a metabolic regulatory node that coordinates branched-chain amino acids (BCAAs) with glucose and lipid metabolism via two distinct phosphoprotein targets: mitochondrial BCKDHA subunit of the branched-chain alpha-ketoacid dehydrogenase (BCKDH) complex and cytosolic ACLY, a lipogenic enzyme of Krebs cycle. Phosphorylates and inactivates mitochondrial BCKDH complex a multisubunit complex consisting of three multimeric components each involved in different steps of BCAA catabolism: E1 composed of BCKDHA and BCKDHB, E2 core composed of DBT monomers, and E3 composed of DLD monomers. Associates with the E2 component of BCKDH complex and phosphorylates BCKDHA on Ser-337, leading to conformational changes that interrupt substrate channeling between E1 and E2 and inactivates the BCKDH complex. Phosphorylates ACLY on Ser-455 in response to changes in cellular carbohydrate abundance such as occurs during fasting to feeding metabolic transition. Refeeding stimulates MLXIPL/ChREBP transcription factor, leading to increased BCKDK to PPM1K expression ratio, phosphorylation and activation of ACLY that ultimately results in the generation of malonyl-CoA and oxaloacetate immediate substrates of de novo lipogenesis and glucogenesis, respectively. Recognizes phosphosites having SxxE/D canonical motif. In Homo sapiens (Human), this protein is Branched-chain alpha-ketoacid dehydrogenase kinase.